Reading from the N-terminus, the 456-residue chain is Transcription factor tau subunit sfc1 (456 aa).

2 disordered regions span residues 394-416 and 437-456; these read DRYS…GLNT and HEGF…IFGD. Over residues 407–416 the composition is skewed to polar residues; that stretch reads LNDTVRGLNT. Acidic residues predominate over residues 441–456; sequence EDLEEIDDDYDDIFGD.

As to quaternary structure, component of the TFIIIC complex including sfc1, sfc3, sfc4, sfc6 and sfc7. The subunits are organized in two globular domains, tauA and tauB, connected by a proteolysis-sensitive and flexible linker. Interacts with sfc3, sfc4 and sfc6. Post-translationally, phosphorylated.

Its subcellular location is the nucleus. Its function is as follows. TFIIIC mediates tRNA and 5S RNA gene activation by binding to intragenic promoter elements. Upstream of the transcription start site, TFIIIC assembles the initiation complex TFIIIB-TFIIIC-tDNA, which is sufficient for RNA polymerase III recruitment and function. Part of the tauA domain of TFIIIC that binds boxA DNA promoter sites of tRNA and similar genes. Participates in the interconnection of tauA with tauB via its contacts with sfc3 and sfc6. Serves as a scaffold critical for tauA-DNA spatial configuration and tauB-DNA stability. Localizes to chromatin insulator sequence without recruiting RNA polymerase III and plays a role in nuclear organization. This chain is Transcription factor tau subunit sfc1 (sfc1), found in Schizosaccharomyces pombe (strain 972 / ATCC 24843) (Fission yeast).